Consider the following 475-residue polypeptide: Protein nucleotidyltransferase YdiU (475 aa).

The ATP site is built by Gly-82, Gly-84, Arg-85, Lys-105, Asp-117, Gly-118, Arg-168, and Arg-175. The active-site Proton acceptor is the Asp-240. Asn-241 and Asp-250 together coordinate Mg(2+). Residue Asp-250 coordinates ATP.

Belongs to the SELO family. Requires Mg(2+) as cofactor. It depends on Mn(2+) as a cofactor.

The catalysed reaction is L-seryl-[protein] + ATP = 3-O-(5'-adenylyl)-L-seryl-[protein] + diphosphate. It catalyses the reaction L-threonyl-[protein] + ATP = 3-O-(5'-adenylyl)-L-threonyl-[protein] + diphosphate. It carries out the reaction L-tyrosyl-[protein] + ATP = O-(5'-adenylyl)-L-tyrosyl-[protein] + diphosphate. The enzyme catalyses L-histidyl-[protein] + UTP = N(tele)-(5'-uridylyl)-L-histidyl-[protein] + diphosphate. The catalysed reaction is L-seryl-[protein] + UTP = O-(5'-uridylyl)-L-seryl-[protein] + diphosphate. It catalyses the reaction L-tyrosyl-[protein] + UTP = O-(5'-uridylyl)-L-tyrosyl-[protein] + diphosphate. Functionally, nucleotidyltransferase involved in the post-translational modification of proteins. It can catalyze the addition of adenosine monophosphate (AMP) or uridine monophosphate (UMP) to a protein, resulting in modifications known as AMPylation and UMPylation. The protein is Protein nucleotidyltransferase YdiU of Aeromonas salmonicida (strain A449).